A 95-amino-acid polypeptide reads, in one-letter code: Co-chaperonin GroES (95 aa).

This sequence belongs to the GroES chaperonin family. As to quaternary structure, heptamer of 7 subunits arranged in a ring. Interacts with the chaperonin GroEL.

It localises to the cytoplasm. In terms of biological role, together with the chaperonin GroEL, plays an essential role in assisting protein folding. The GroEL-GroES system forms a nano-cage that allows encapsulation of the non-native substrate proteins and provides a physical environment optimized to promote and accelerate protein folding. GroES binds to the apical surface of the GroEL ring, thereby capping the opening of the GroEL channel. In Deinococcus radiodurans (strain ATCC 13939 / DSM 20539 / JCM 16871 / CCUG 27074 / LMG 4051 / NBRC 15346 / NCIMB 9279 / VKM B-1422 / R1), this protein is Co-chaperonin GroES.